The primary structure comprises 116 residues: MRSAMLFAAVLALSLAWTFGAVCEEPQGQGGRLSKDSDLYQLPPSLLRRLYDSRPVSLEGLLKVLSKASVGPKETSLPQKRDMHDFFVGLMGKRNSQPDTPTDVVEENTPSFGILK.

A signal peptide spans 1–20 (MRSAMLFAAVLALSLAWTFG). The propeptide occupies 21 to 79 (AVCEEPQGQGGRLSKDSDLYQLPPSLLRRLYDSRPVSLEGLLKVLSKASVGPKETSLPQ). A Methionine amide modification is found at Met-91. The tract at residues 93-116 (KRNSQPDTPTDVVEENTPSFGILK) is disordered. A propeptide spanning residues 95–116 (NSQPDTPTDVVEENTPSFGILK) is cleaved from the precursor.

The protein belongs to the tachykinin family.

The protein resides in the secreted. In terms of biological role, tachykinins are active peptides which excite neurons, evoke behavioral responses, are potent vasodilators and secretagogues, and contract (directly or indirectly) many smooth muscles. Is a critical central regulator of gonadal function. The protein is Tachykinin-3 (Tac3) of Mus musculus (Mouse).